Consider the following 143-residue polypeptide: Flagellar assembly factor FliW (143 aa).

The protein belongs to the FliW family. As to quaternary structure, interacts with translational regulator CsrA and flagellin(s).

It localises to the cytoplasm. In terms of biological role, acts as an anti-CsrA protein, binds CsrA and prevents it from repressing translation of its target genes, one of which is flagellin. Binds to flagellin and participates in the assembly of the flagellum. The polypeptide is Flagellar assembly factor FliW (Clostridium botulinum (strain ATCC 19397 / Type A)).